The primary structure comprises 275 residues: MDSYNYRDFAVGGGLLQRIRLVVSGSLHCGESDATLNDPKHLPARCVFQFSGPDNNSVTFPIEYVLRLMKNWARSQCDPYIRIQNTGVSVLFQGFFFAPPNAPMASITSEHNNVILKSTHTTGLALSGIERVKRGGGLDLRPLQAMMQISCFTRMPVVQLSFRFMGPEDASRTQRLLERATSFGAMELHQKRTVDSCDRSNGIVSPREHRECRERQKRRPTPKRCASEVFASLASISSAFASERVKRRPVRIAAAILAFVFVAVILAIATKGRLF.

Over 1–251 the chain is Perinuclear space; it reads MDSYNYRDFA…SERVKRRPVR (251 aa). A disordered region spans residues 197–221; that stretch reads CDRSNGIVSPREHRECRERQKRRPT. A helical membrane pass occupies residues 252–272; sequence IAAAILAFVFVAVILAIATKG. Over 273-275 the chain is Nuclear; the sequence is RLF.

This sequence belongs to the herpesviridae NEC2 protein family. Forms a heterohexameric complex with NEC1. Phosphorylated.

The protein localises to the host nucleus inner membrane. Plays an essential role in virion nuclear egress, the first step of virion release from infected cell. Within the host nucleus, NEC1 interacts with the newly formed capsid through the vertexes and directs it to the inner nuclear membrane by associating with NEC2. Induces the budding of the capsid at the inner nuclear membrane as well as its envelopment into the perinuclear space. There, the NEC1/NEC2 complex promotes the fusion of the enveloped capsid with the outer nuclear membrane and the subsequent release of the viral capsid into the cytoplasm where it will reach the secondary budding sites in the host Golgi or trans-Golgi network. This chain is Nuclear egress protein 2, found in Equus caballus (Horse).